The chain runs to 881 residues: Mechanosensitive ion channel protein 4 (881 aa).

The disordered stretch occupies residues 35 to 245; that stretch reads FWHNDKSSKP…EEEDPFSEED (211 aa). Over residues 56–66 the composition is skewed to basic and acidic residues; it reads FMRRSSEKSEE. 3 stretches are compositionally biased toward polar residues: residues 73-82, 100-118, and 206-230; these read LINQFLNKQK, QKNT…SASP, and TPRS…NQGG. Residues 234–245 show a composition bias toward acidic residues; sequence LEEEEDPFSEED. The next 4 helical transmembrane spans lie at 255–275, 297–317, 339–359, and 377–397; these read ICVW…SLIC, VMVL…KLFV, KPVQ…FLFD, and VLIC…LVKV. The tract at residues 457-501 is disordered; sequence GPKAVSSPPQVTVGSGRLQKSPSRVGKSPVLSRSGSKKEGGEEGI. Positions 463–478 are enriched in polar residues; that stretch reads SPPQVTVGSGRLQKSP. Basic and acidic residues predominate over residues 492 to 501; that stretch reads SKKEGGEEGI. 2 consecutive transmembrane segments (helical) span residues 643 to 663 and 678 to 698; these read IVDV…LGIA and VVFV…FVFV.

This sequence belongs to the MscS (TC 1.A.23) family.

The protein localises to the membrane. In terms of biological role, mechanosensitive channel that opens in response to stretch forces in the membrane lipid bilayer. The sequence is that of Mechanosensitive ion channel protein 4 (MSL4) from Arabidopsis thaliana (Mouse-ear cress).